A 130-amino-acid chain; its full sequence is Ribosome-binding factor A (130 aa).

The protein belongs to the RbfA family. In terms of assembly, monomer. Binds 30S ribosomal subunits, but not 50S ribosomal subunits or 70S ribosomes.

It is found in the cytoplasm. Its function is as follows. One of several proteins that assist in the late maturation steps of the functional core of the 30S ribosomal subunit. Associates with free 30S ribosomal subunits (but not with 30S subunits that are part of 70S ribosomes or polysomes). Required for efficient processing of 16S rRNA. May interact with the 5'-terminal helix region of 16S rRNA. The protein is Ribosome-binding factor A of Pseudomonas aeruginosa (strain LESB58).